The following is a 216-amino-acid chain: Sporamin B (216 aa).

Residues 1–21 (MKALALLFVLSLYLLPNPAHS) form the signal peptide.

This sequence belongs to the protease inhibitor I3 (leguminous Kunitz-type inhibitor) family. As to expression, accumulates specifically in tuberous roots and tubers upon tuberization. Sporamin accounts 60 to 80% of the total soluble protein of the organ.

It localises to the vacuole. Functionally, major tuberous root protein. This Ipomoea batatas (Sweet potato) protein is Sporamin B (GSPO-B1).